A 157-amino-acid chain; its full sequence is MRIGHGYDVHRFAEGDFITLGGVRIAHHHGLLAHSDGDVVLHALSDALLGAAALGDIGKHFPDTDPTFKGADSRVLLRHVVGLIHAKGWKVGNVDNTIVAQAPKMAPHIESMRALIAADLQIELDQVNVKATTTEKLGFTGREEGIAVHSVALLLRA.

2 residues coordinate a divalent metal cation: aspartate 8 and histidine 10. Residues 8 to 10 (DVH) and 34 to 35 (HS) contribute to the 4-CDP-2-C-methyl-D-erythritol 2-phosphate site. A divalent metal cation is bound at residue histidine 42. Residues 56–58 (DIG), 61–65 (FPDTD), 100–106 (AQAPKMA), 132–135 (TTTE), phenylalanine 139, and arginine 142 each bind 4-CDP-2-C-methyl-D-erythritol 2-phosphate.

This sequence belongs to the IspF family. In terms of assembly, homotrimer. A divalent metal cation serves as cofactor.

It carries out the reaction 4-CDP-2-C-methyl-D-erythritol 2-phosphate = 2-C-methyl-D-erythritol 2,4-cyclic diphosphate + CMP. The protein operates within isoprenoid biosynthesis; isopentenyl diphosphate biosynthesis via DXP pathway; isopentenyl diphosphate from 1-deoxy-D-xylulose 5-phosphate: step 4/6. Its function is as follows. Involved in the biosynthesis of isopentenyl diphosphate (IPP) and dimethylallyl diphosphate (DMAPP), two major building blocks of isoprenoid compounds. Catalyzes the conversion of 4-diphosphocytidyl-2-C-methyl-D-erythritol 2-phosphate (CDP-ME2P) to 2-C-methyl-D-erythritol 2,4-cyclodiphosphate (ME-CPP) with a corresponding release of cytidine 5-monophosphate (CMP). The polypeptide is 2-C-methyl-D-erythritol 2,4-cyclodiphosphate synthase (Pseudomonas fluorescens (strain SBW25)).